A 378-amino-acid polypeptide reads, in one-letter code: Queuine tRNA-ribosyltransferase (378 aa).

The active-site Proton acceptor is Asp-91. Residues 91 to 95 (DSGGF), Asp-145, Gln-189, and Gly-216 each bind substrate. The segment at 247 to 253 (GVGKPED) is RNA binding. The active-site Nucleophile is Asp-266. An RNA binding; important for wobble base 34 recognition region spans residues 271 to 275 (TRNAR). The Zn(2+) site is built by Cys-304, Cys-306, Cys-309, and His-335.

It belongs to the queuine tRNA-ribosyltransferase family. Homodimer. Within each dimer, one monomer is responsible for RNA recognition and catalysis, while the other monomer binds to the replacement base PreQ1. The cofactor is Zn(2+).

It carries out the reaction 7-aminomethyl-7-carbaguanine + guanosine(34) in tRNA = 7-aminomethyl-7-carbaguanosine(34) in tRNA + guanine. It participates in tRNA modification; tRNA-queuosine biosynthesis. Catalyzes the base-exchange of a guanine (G) residue with the queuine precursor 7-aminomethyl-7-deazaguanine (PreQ1) at position 34 (anticodon wobble position) in tRNAs with GU(N) anticodons (tRNA-Asp, -Asn, -His and -Tyr). Catalysis occurs through a double-displacement mechanism. The nucleophile active site attacks the C1' of nucleotide 34 to detach the guanine base from the RNA, forming a covalent enzyme-RNA intermediate. The proton acceptor active site deprotonates the incoming PreQ1, allowing a nucleophilic attack on the C1' of the ribose to form the product. After dissociation, two additional enzymatic reactions on the tRNA convert PreQ1 to queuine (Q), resulting in the hypermodified nucleoside queuosine (7-(((4,5-cis-dihydroxy-2-cyclopenten-1-yl)amino)methyl)-7-deazaguanosine). The polypeptide is Queuine tRNA-ribosyltransferase (Vibrio vulnificus (strain CMCP6)).